Consider the following 1351-residue polypeptide: uncharacterized protein (1351 aa).

Over residues 1 to 17 (MSKKDSKNSPKKSKDTN) the composition is skewed to basic and acidic residues. Residues 1-31 (MSKKDSKNSPKKSKDTNSDESSSSNAETSSD) are disordered. Positions 19 to 31 (DESSSSNAETSSD) are enriched in low complexity.

This is an uncharacterized protein from Acanthamoeba polyphaga mimivirus (APMV).